The sequence spans 274 residues: 2,3,4,5-tetrahydropyridine-2,6-dicarboxylate N-succinyltransferase (274 aa).

Residues Arg-106 and Asp-143 each coordinate substrate.

The protein belongs to the transferase hexapeptide repeat family. Homotrimer.

Its subcellular location is the cytoplasm. It carries out the reaction (S)-2,3,4,5-tetrahydrodipicolinate + succinyl-CoA + H2O = (S)-2-succinylamino-6-oxoheptanedioate + CoA. It participates in amino-acid biosynthesis; L-lysine biosynthesis via DAP pathway; LL-2,6-diaminopimelate from (S)-tetrahydrodipicolinate (succinylase route): step 1/3. The chain is 2,3,4,5-tetrahydropyridine-2,6-dicarboxylate N-succinyltransferase from Albidiferax ferrireducens (strain ATCC BAA-621 / DSM 15236 / T118) (Rhodoferax ferrireducens).